A 40-amino-acid polypeptide reads, in one-letter code: Photosystem II reaction center protein J (40 aa).

The chain crosses the membrane as a helical span at residues 8-28; the sequence is IPLWIIGTVAGILVIGLVGIF.

The protein belongs to the PsbJ family. As to quaternary structure, PSII is composed of 1 copy each of membrane proteins PsbA, PsbB, PsbC, PsbD, PsbE, PsbF, PsbH, PsbI, PsbJ, PsbK, PsbL, PsbM, PsbT, PsbX, PsbY, PsbZ, Psb30/Ycf12, at least 3 peripheral proteins of the oxygen-evolving complex and a large number of cofactors. It forms dimeric complexes.

Its subcellular location is the plastid. The protein localises to the chloroplast thylakoid membrane. Functionally, one of the components of the core complex of photosystem II (PSII). PSII is a light-driven water:plastoquinone oxidoreductase that uses light energy to abstract electrons from H(2)O, generating O(2) and a proton gradient subsequently used for ATP formation. It consists of a core antenna complex that captures photons, and an electron transfer chain that converts photonic excitation into a charge separation. The polypeptide is Photosystem II reaction center protein J (Spinacia oleracea (Spinach)).